Reading from the N-terminus, the 259-residue chain is Caffeoyl-CoA O-methyltransferase 1 (259 aa).

Residues 1–14 (MATTTTEATKTSST) are compositionally biased toward low complexity. A disordered region spans residues 1 to 29 (MATTTTEATKTSSTNGEDQKQSQNLRHQE). Position 2 is an N-acetylalanine (A2). Residue K33 coordinates substrate. Residues T75, E97, 99–100 (GV), S105, D123, and A152 each bind S-adenosyl-L-methionine. D175 is a binding site for substrate. Position 175 (D175) interacts with a divalent metal cation. S-adenosyl-L-methionine is bound at residue D177. A divalent metal cation-binding residues include D201 and N202. N206 provides a ligand contact to substrate.

It belongs to the class I-like SAM-binding methyltransferase superfamily. Cation-dependent O-methyltransferase family. CCoAMT subfamily. A divalent metal cation is required as a cofactor. As to expression, expressed in stems and roots. Detected in leaves, siliques, flower buds, flowers. Expressed in the tapetum, but not in the endothecium. Detected in the vascular system of leaves and all flower organs, including stigma, stamens, petals and sepals.

The catalysed reaction is (E)-caffeoyl-CoA + S-adenosyl-L-methionine = (E)-feruloyl-CoA + S-adenosyl-L-homocysteine + H(+). It functions in the pathway aromatic compound metabolism; phenylpropanoid biosynthesis. In terms of biological role, methylates caffeoyl-CoA to feruloyl-CoA. Has a very low activity with caffeic acid and esculetin. Involved in scopoletin biosynthesis in roots. The chain is Caffeoyl-CoA O-methyltransferase 1 (CCOAOMT1) from Arabidopsis thaliana (Mouse-ear cress).